Here is a 118-residue protein sequence, read N- to C-terminus: Thioredoxin H-type (118 aa).

A Thioredoxin domain is found at 2–114; the sequence is AAEEGQVIGC…LQQTIAKHMA (113 aa). Catalysis depends on nucleophile residues Cys40 and Cys43. Cys40 and Cys43 form a disulfide bridge.

Belongs to the thioredoxin family. Plant H-type subfamily.

The protein resides in the cytoplasm. Functionally, participates in various redox reactions through the reversible oxidation of the active center dithiol to a disulfide. The H form is known to activate a number of cytosolic enzymes. The sequence is that of Thioredoxin H-type from Ricinus communis (Castor bean).